Here is a 269-residue protein sequence, read N- to C-terminus: Tryptophan synthase alpha chain (269 aa).

Catalysis depends on proton acceptor residues glutamate 49 and aspartate 60.

The protein belongs to the TrpA family. In terms of assembly, tetramer of two alpha and two beta chains.

The enzyme catalyses (1S,2R)-1-C-(indol-3-yl)glycerol 3-phosphate + L-serine = D-glyceraldehyde 3-phosphate + L-tryptophan + H2O. It functions in the pathway amino-acid biosynthesis; L-tryptophan biosynthesis; L-tryptophan from chorismate: step 5/5. Its function is as follows. The alpha subunit is responsible for the aldol cleavage of indoleglycerol phosphate to indole and glyceraldehyde 3-phosphate. This is Tryptophan synthase alpha chain from Azotobacter vinelandii (strain DJ / ATCC BAA-1303).